Reading from the N-terminus, the 536-residue chain is Phosphoenolpyruvate carboxykinase (ATP) (536 aa).

Substrate is bound by residues Arg-61, Tyr-195, and Lys-201. ATP is bound by residues Lys-201, His-220, and 236–244; that span reads GLSGTGKTT. Residues Lys-201 and His-220 each coordinate Mn(2+). Position 257 (Asp-257) interacts with Mn(2+). Positions 285, 322, and 447 each coordinate ATP. Arg-322 serves as a coordination point for substrate.

This sequence belongs to the phosphoenolpyruvate carboxykinase (ATP) family. The cofactor is Mn(2+).

The protein resides in the cytoplasm. The enzyme catalyses oxaloacetate + ATP = phosphoenolpyruvate + ADP + CO2. It functions in the pathway carbohydrate biosynthesis; gluconeogenesis. Functionally, involved in the gluconeogenesis. Catalyzes the conversion of oxaloacetate (OAA) to phosphoenolpyruvate (PEP) through direct phosphoryl transfer between the nucleoside triphosphate and OAA. The protein is Phosphoenolpyruvate carboxykinase (ATP) of Sinorhizobium medicae (strain WSM419) (Ensifer medicae).